We begin with the raw amino-acid sequence, 203 residues long: Leucyl/phenylalanyl-tRNA--protein transferase (203 aa).

The protein belongs to the L/F-transferase family.

Its subcellular location is the cytoplasm. It catalyses the reaction N-terminal L-lysyl-[protein] + L-leucyl-tRNA(Leu) = N-terminal L-leucyl-L-lysyl-[protein] + tRNA(Leu) + H(+). The catalysed reaction is N-terminal L-arginyl-[protein] + L-leucyl-tRNA(Leu) = N-terminal L-leucyl-L-arginyl-[protein] + tRNA(Leu) + H(+). The enzyme catalyses L-phenylalanyl-tRNA(Phe) + an N-terminal L-alpha-aminoacyl-[protein] = an N-terminal L-phenylalanyl-L-alpha-aminoacyl-[protein] + tRNA(Phe). Functionally, functions in the N-end rule pathway of protein degradation where it conjugates Leu, Phe and, less efficiently, Met from aminoacyl-tRNAs to the N-termini of proteins containing an N-terminal arginine or lysine. In Chelativorans sp. (strain BNC1), this protein is Leucyl/phenylalanyl-tRNA--protein transferase.